The primary structure comprises 542 residues: Chaperonin GroEL 2 (542 aa).

ATP is bound by residues 30–33, K51, 87–91, G415, and D496; these read TLGP and DGTTT.

It belongs to the chaperonin (HSP60) family. Forms a cylinder of 14 subunits composed of two heptameric rings stacked back-to-back. Interacts with the co-chaperonin GroES.

The protein resides in the cytoplasm. The enzyme catalyses ATP + H2O + a folded polypeptide = ADP + phosphate + an unfolded polypeptide.. Its function is as follows. Together with its co-chaperonin GroES, plays an essential role in assisting protein folding. The GroEL-GroES system forms a nano-cage that allows encapsulation of the non-native substrate proteins and provides a physical environment optimized to promote and accelerate protein folding. In Rhizobium meliloti (strain 1021) (Ensifer meliloti), this protein is Chaperonin GroEL 2.